The primary structure comprises 425 residues: Serine--tRNA ligase (425 aa).

229–231 (TSE) serves as a coordination point for L-serine. Residues 259–261 (RKE) and V275 each bind ATP. E282 contacts L-serine. Position 349–352 (349–352 (EITS)) interacts with ATP. T384 is a binding site for L-serine.

This sequence belongs to the class-II aminoacyl-tRNA synthetase family. Type-1 seryl-tRNA synthetase subfamily. Homodimer. The tRNA molecule binds across the dimer.

The protein resides in the cytoplasm. The catalysed reaction is tRNA(Ser) + L-serine + ATP = L-seryl-tRNA(Ser) + AMP + diphosphate + H(+). It catalyses the reaction tRNA(Sec) + L-serine + ATP = L-seryl-tRNA(Sec) + AMP + diphosphate + H(+). The protein operates within aminoacyl-tRNA biosynthesis; selenocysteinyl-tRNA(Sec) biosynthesis; L-seryl-tRNA(Sec) from L-serine and tRNA(Sec): step 1/1. Functionally, catalyzes the attachment of serine to tRNA(Ser). Is also able to aminoacylate tRNA(Sec) with serine, to form the misacylated tRNA L-seryl-tRNA(Sec), which will be further converted into selenocysteinyl-tRNA(Sec). The protein is Serine--tRNA ligase of Borreliella afzelii (strain PKo) (Borrelia afzelii).